The sequence spans 212 residues: ATP phosphoribosyltransferase (212 aa).

Belongs to the ATP phosphoribosyltransferase family. Short subfamily. In terms of assembly, heteromultimer composed of HisG and HisZ subunits.

Its subcellular location is the cytoplasm. It catalyses the reaction 1-(5-phospho-beta-D-ribosyl)-ATP + diphosphate = 5-phospho-alpha-D-ribose 1-diphosphate + ATP. Its pathway is amino-acid biosynthesis; L-histidine biosynthesis; L-histidine from 5-phospho-alpha-D-ribose 1-diphosphate: step 1/9. In terms of biological role, catalyzes the condensation of ATP and 5-phosphoribose 1-diphosphate to form N'-(5'-phosphoribosyl)-ATP (PR-ATP). Has a crucial role in the pathway because the rate of histidine biosynthesis seems to be controlled primarily by regulation of HisG enzymatic activity. This is ATP phosphoribosyltransferase from Citrifermentans bemidjiense (strain ATCC BAA-1014 / DSM 16622 / JCM 12645 / Bem) (Geobacter bemidjiensis).